The sequence spans 390 residues: 1-deoxy-D-xylulose 5-phosphate reductoisomerase (390 aa).

NADPH contacts are provided by threonine 10, glycine 11, serine 12, isoleucine 13, glycine 36, asparagine 38, and asparagine 124. Residue lysine 125 participates in 1-deoxy-D-xylulose 5-phosphate binding. NADPH is bound at residue glutamate 126. Aspartate 150 lines the Mn(2+) pocket. 1-deoxy-D-xylulose 5-phosphate contacts are provided by serine 151, glutamate 152, serine 176, and histidine 199. Glutamate 152 serves as a coordination point for Mn(2+). Glycine 205 serves as a coordination point for NADPH. Serine 212, asparagine 217, lysine 218, and glutamate 221 together coordinate 1-deoxy-D-xylulose 5-phosphate. Mn(2+) is bound at residue glutamate 221.

This sequence belongs to the DXR family. It depends on Mg(2+) as a cofactor. Mn(2+) serves as cofactor.

The enzyme catalyses 2-C-methyl-D-erythritol 4-phosphate + NADP(+) = 1-deoxy-D-xylulose 5-phosphate + NADPH + H(+). Its pathway is isoprenoid biosynthesis; isopentenyl diphosphate biosynthesis via DXP pathway; isopentenyl diphosphate from 1-deoxy-D-xylulose 5-phosphate: step 1/6. In terms of biological role, catalyzes the NADPH-dependent rearrangement and reduction of 1-deoxy-D-xylulose-5-phosphate (DXP) to 2-C-methyl-D-erythritol 4-phosphate (MEP). This chain is 1-deoxy-D-xylulose 5-phosphate reductoisomerase, found in Microcystis aeruginosa (strain NIES-843 / IAM M-2473).